Consider the following 346-residue polypeptide: Alkylated DNA repair protein ALKBH8 homolog (346 aa).

The tract at residues M1–P21 is disordered. The segment covering S12–P21 has biased composition (low complexity). The RRM domain occupies S24 to L102. Positions N208–R328 constitute a Fe2OG dioxygenase domain. H226, D228, and H298 together coordinate Fe cation. Residues R319 and R325 each contribute to the 2-oxoglutarate site.

Belongs to the alkB family. Fe(2+) is required as a cofactor.

Its function is as follows. Binds tRNA and catalyzes the iron and alpha-ketoglutarate dependent hydroxylation of 5-methylcarboxymethyl uridine at the wobble position of the anticodon loop in tRNA via its dioxygenase domain, giving rise to 5-(S)-methoxycarbonylhydroxymethyluridine. The sequence is that of Alkylated DNA repair protein ALKBH8 homolog from Arabidopsis thaliana (Mouse-ear cress).